The primary structure comprises 308 residues: Ribonuclease HIII (308 aa).

The 217-residue stretch at D92–L308 folds into the RNase H type-2 domain. The a divalent metal cation site is built by D98, E99, and D204.

It belongs to the RNase HII family. RnhC subfamily. The cofactor is Mn(2+). Requires Mg(2+) as cofactor.

It localises to the cytoplasm. It carries out the reaction Endonucleolytic cleavage to 5'-phosphomonoester.. Endonuclease that specifically degrades the RNA of RNA-DNA hybrids. The sequence is that of Ribonuclease HIII from Oceanobacillus iheyensis (strain DSM 14371 / CIP 107618 / JCM 11309 / KCTC 3954 / HTE831).